The sequence spans 406 residues: Corticosteroid-binding globulin (406 aa).

The first 22 residues, 1–22 (MPLLLYTCLLWLLSSGLWTVQA), serve as a signal peptide directing secretion. N-linked (GlcNAc...) asparagine glycans are attached at residues Asn-31 and Asn-96. Gln-255 lines the cortisol pocket. Residue Asn-261 is glycosylated (N-linked (GlcNAc...) asparagine). Asp-287 serves as a coordination point for cortisol. Residues Asn-331 and Asn-360 are each glycosylated (N-linked (GlcNAc...) asparagine). Trp-394 is a cortisol binding site.

Belongs to the serpin family. Expressed by the liver; secreted in plasma.

It is found in the secreted. Its function is as follows. Major transport protein for glucocorticoids and progestins in the blood of almost all vertebrate species. The sequence is that of Corticosteroid-binding globulin (SERPINA6) from Saimiri sciureus (Common squirrel monkey).